The following is a 155-amino-acid chain: 6,7-dimethyl-8-ribityllumazine synthase (155 aa).

Residues Phe-22, 56-58 (AFE), and 80-82 (AVI) contribute to the 5-amino-6-(D-ribitylamino)uracil site. Residue 85-86 (ST) coordinates (2S)-2-hydroxy-3-oxobutyl phosphate. His-88 (proton donor) is an active-site residue. 5-amino-6-(D-ribitylamino)uracil is bound at residue Phe-113. Residue Arg-127 coordinates (2S)-2-hydroxy-3-oxobutyl phosphate.

It belongs to the DMRL synthase family.

The catalysed reaction is (2S)-2-hydroxy-3-oxobutyl phosphate + 5-amino-6-(D-ribitylamino)uracil = 6,7-dimethyl-8-(1-D-ribityl)lumazine + phosphate + 2 H2O + H(+). The protein operates within cofactor biosynthesis; riboflavin biosynthesis; riboflavin from 2-hydroxy-3-oxobutyl phosphate and 5-amino-6-(D-ribitylamino)uracil: step 1/2. Its function is as follows. Catalyzes the formation of 6,7-dimethyl-8-ribityllumazine by condensation of 5-amino-6-(D-ribitylamino)uracil with 3,4-dihydroxy-2-butanone 4-phosphate. This is the penultimate step in the biosynthesis of riboflavin. The protein is 6,7-dimethyl-8-ribityllumazine synthase of Caldicellulosiruptor bescii (strain ATCC BAA-1888 / DSM 6725 / KCTC 15123 / Z-1320) (Anaerocellum thermophilum).